The following is a 260-amino-acid chain: 3'-5' ssDNA/RNA exonuclease TatD (260 aa).

A divalent metal cation-binding residues include glutamate 92, histidine 128, and histidine 153.

It belongs to the metallo-dependent hydrolases superfamily. TatD-type hydrolase family. TatD subfamily. In terms of assembly, monomer. Mg(2+) serves as cofactor.

The protein resides in the cytoplasm. In terms of biological role, 3'-5' exonuclease that prefers single-stranded DNA and RNA. May play a role in the H(2)O(2)-induced DNA damage repair. This Pectobacterium atrosepticum (strain SCRI 1043 / ATCC BAA-672) (Erwinia carotovora subsp. atroseptica) protein is 3'-5' ssDNA/RNA exonuclease TatD.